Consider the following 459-residue polypeptide: Mitochondrial distribution and morphology protein 34 (459 aa).

In terms of domain architecture, SMP-LTD spans 1-190; that stretch reads MSFRFNEAVF…LPSLIFNTSQ (190 aa). Residues 338–347 are compositionally biased toward basic and acidic residues; sequence RSNSNDDNAK. The interval 338 to 375 is disordered; that stretch reads RSNSNDDNAKPRRRKIKCKKTRTPSNLQSQGEQAVDDS. The span at 348–359 shows a compositional bias: basic residues; sequence PRRRKIKCKKTR.

This sequence belongs to the MDM34 family. As to quaternary structure, component of the ER-mitochondria encounter structure (ERMES) or MDM complex, composed of MMM1, MDM10, MDM12 and MDM34. Ubiquitinated by a SCF (SKP1-CUL1-F-box protein) E3 ubiquitin-protein ligase complex containing the F-box protein MDM30. Ubiquitination is important for mitochondrial integrity.

It is found in the mitochondrion outer membrane. In terms of biological role, component of the ERMES/MDM complex, which serves as a molecular tether to connect the endoplasmic reticulum (ER) and mitochondria. Components of this complex are involved in the control of mitochondrial shape and protein biogenesis, and function in nonvesicular lipid trafficking between the ER and mitochondria. MDM34 is required for the interaction of the ER-resident membrane protein MMM1 and the outer mitochondrial membrane-resident beta-barrel protein MDM10. The protein is Mitochondrial distribution and morphology protein 34 of Saccharomyces cerevisiae (strain AWRI1631) (Baker's yeast).